The chain runs to 121 residues: Large ribosomal subunit protein uL22 (121 aa).

It belongs to the universal ribosomal protein uL22 family. In terms of assembly, part of the 50S ribosomal subunit.

In terms of biological role, this protein binds specifically to 23S rRNA; its binding is stimulated by other ribosomal proteins, e.g. L4, L17, and L20. It is important during the early stages of 50S assembly. It makes multiple contacts with different domains of the 23S rRNA in the assembled 50S subunit and ribosome. The globular domain of the protein is located near the polypeptide exit tunnel on the outside of the subunit, while an extended beta-hairpin is found that lines the wall of the exit tunnel in the center of the 70S ribosome. The polypeptide is Large ribosomal subunit protein uL22 (Synechocystis sp. (strain ATCC 27184 / PCC 6803 / Kazusa)).